The primary structure comprises 1091 residues: ATP-dependent RNA helicase ddx54 (1091 aa).

2 disordered regions span residues M1–F63 and D150–G231. Residues M26 to S35 are compositionally biased toward basic and acidic residues. The span at D150 to F161 shows a compositional bias: polar residues. Positions K196–E207 are enriched in basic and acidic residues. Residues G230 to R258 carry the Q motif motif. Residues I261–I433 enclose the Helicase ATP-binding domain. Residue A274–T281 participates in ATP binding. The short motif at D381–D384 is the DEAD box element. The Helicase C-terminal domain maps to T478–N632. 2 disordered regions span residues E801 to N896 and K933 to K1091. Over residues D814–E823 the composition is skewed to basic and acidic residues. The span at N824–E855 shows a compositional bias: acidic residues. 3 stretches are compositionally biased toward basic and acidic residues: residues E865 to K874, D944 to K975, and Q1008 to A1019. A compositionally biased stretch (basic residues) spans S1020–K1029. Positions R1031 to M1052 are enriched in basic and acidic residues. The span at S1068–F1079 shows a compositional bias: gly residues.

The protein belongs to the DEAD box helicase family. DDX54/DBP10 subfamily.

Its subcellular location is the nucleus. It localises to the nucleolus. The enzyme catalyses ATP + H2O = ADP + phosphate + H(+). Functionally, ATP-binding RNA helicase which may be involved in the ribosome biogenesis. The polypeptide is ATP-dependent RNA helicase ddx54 (helA) (Dictyostelium discoideum (Social amoeba)).